Reading from the N-terminus, the 102-residue chain is Large ribosomal subunit protein bL21 (102 aa).

The protein belongs to the bacterial ribosomal protein bL21 family. Part of the 50S ribosomal subunit. Contacts protein L20.

Its function is as follows. This protein binds to 23S rRNA in the presence of protein L20. This is Large ribosomal subunit protein bL21 from Macrococcus caseolyticus (strain JCSC5402) (Macrococcoides caseolyticum).